Reading from the N-terminus, the 367-residue chain is Transcription factor aptf-2 (367 aa).

The disordered stretch occupies residues 29–49 (VPATKETGPSSSAECSTQPAV). Polar residues predominate over residues 36 to 47 (GPSSSAECSTQP). Positions 220 to 354 (AKQKAFPNKV…GVASELRRLT (135 aa)) are H-S-H (helix-span-helix), dimerization.

The protein belongs to the AP-2 family. As to quaternary structure, binds DNA as a dimer.

The protein localises to the nucleus. It localises to the cytoplasm. Its function is as follows. Sequence-specific DNA-binding protein that interacts with enhancer elements to regulate transcription of selected genes. Required for neuroblast and epidermal morphogenesis, perhaps acting in cooperation with transcription factor aptf-4. The protein is Transcription factor aptf-2 of Caenorhabditis elegans.